The primary structure comprises 126 residues: MSALDDSIRVEVKTEYIEQQSSPEDQKYLFSYTITIVNLGEQAAKLETRHWIITDANGKITEVQGAGVVGETPTIPPNTAYQYTSGTVLDTPLGIMYGTYGMVSESGERFKATIKPFRLALPGLLH.

The ApaG domain occupies 2 to 126; the sequence is SALDDSIRVE…FRLALPGLLH (125 aa).

This Shewanella sp. (strain MR-7) protein is Protein ApaG.